Reading from the N-terminus, the 752-residue chain is Photosystem I P700 chlorophyll a apoprotein A1 (752 aa).

The next 8 membrane-spanning stretches (helical) occupy residues 73–96, 159–182, 198–222, 294–312, 349–372, 388–414, 436–458, and 533–551; these read IFSA…FHGA, LYWT…FHYH, MNHH…HIAL, IAHH…GHMY, WHAQ…HHMY, LSLF…IFMV, AIIS…FYIH, and FMVH…LILL. Cys-575 and Cys-584 together coordinate [4Fe-4S] cluster. Transmembrane regions (helical) follow at residues 591-612 and 666-688; these read HVFL…HFSW and SSAY…MFLF. His-677 contributes to the chlorophyll a' binding site. Positions 685 and 693 each coordinate chlorophyll a. Trp-694 lines the phylloquinone pocket. The chain crosses the membrane as a helical span at residues 726–746; the sequence is AVGLAHYLLGGIGTTWAFFLA.

It belongs to the PsaA/PsaB family. In terms of assembly, the PsaA/B heterodimer binds the P700 chlorophyll special pair and subsequent electron acceptors. PSI consists of a core antenna complex that captures photons, and an electron transfer chain that converts photonic excitation into a charge separation. The eukaryotic PSI reaction center is composed of at least 11 subunits. P700 is a chlorophyll a/chlorophyll a' dimer, A0 is one or more chlorophyll a, A1 is one or both phylloquinones and FX is a shared 4Fe-4S iron-sulfur center. is required as a cofactor.

Its subcellular location is the plastid. It is found in the chloroplast thylakoid membrane. It catalyses the reaction reduced [plastocyanin] + hnu + oxidized [2Fe-2S]-[ferredoxin] = oxidized [plastocyanin] + reduced [2Fe-2S]-[ferredoxin]. Functionally, psaA and PsaB bind P700, the primary electron donor of photosystem I (PSI), as well as the electron acceptors A0, A1 and FX. PSI is a plastocyanin/cytochrome c6-ferredoxin oxidoreductase, converting photonic excitation into a charge separation, which transfers an electron from the donor P700 chlorophyll pair to the spectroscopically characterized acceptors A0, A1, FX, FA and FB in turn. Oxidized P700 is reduced on the lumenal side of the thylakoid membrane by plastocyanin or cytochrome c6. In Thalassiosira pseudonana (Marine diatom), this protein is Photosystem I P700 chlorophyll a apoprotein A1.